The sequence spans 260 residues: UPF0246 protein BURPS668_1321 (260 aa).

Belongs to the UPF0246 family.

This chain is UPF0246 protein BURPS668_1321, found in Burkholderia pseudomallei (strain 668).